The following is a 196-amino-acid chain: Serine recombinase PinR (196 aa).

Residues 3-143 enclose the Resolvase/invertase-type recombinase catalytic domain; sequence RIFAYCRIST…SGIVRARGAG (141 aa). Ser11 functions as the O-(5'-phospho-DNA)-serine intermediate in the catalytic mechanism.

This sequence belongs to the site-specific recombinase resolvase family.

The sequence is that of Serine recombinase PinR (pinR) from Escherichia coli (strain K12).